The primary structure comprises 394 residues: Tubulin-like protein CetZ4 (394 aa).

Residues 10–14 (QAGGK), 110–112 (GTG), E142, N169, and N187 each bind GTP.

Belongs to the CetZ family.

It is found in the cytoplasm. Involved in cell shape control. The polypeptide is Tubulin-like protein CetZ4 (Haloferax volcanii (strain ATCC 29605 / DSM 3757 / JCM 8879 / NBRC 14742 / NCIMB 2012 / VKM B-1768 / DS2) (Halobacterium volcanii)).